We begin with the raw amino-acid sequence, 82 residues long: uncharacterized protein (82 aa).

The next 3 helical transmembrane spans lie at 4–26 (LDIA…TCIC), 31–48 (LMPM…FTIF), and 52–74 (FLGW…LIVV).

Its subcellular location is the cell membrane. This is an uncharacterized protein from Bacillus subtilis (strain 168).